The sequence spans 899 residues: Androgen receptor (899 aa).

Positions 1 to 537 are modulating; the sequence is MEVQLGLGRV…PIDYYFPPQK (537 aa). The interaction with ZNF318 stretch occupies residues 1–566; the sequence is MEVQLGLGRV…GSCKVFFKRA (566 aa). Disordered stretches follow at residues 35–146 and 175–222; these read QNPG…LSLL and QQQQ…LGGN. A Phosphoserine; by CDK9 modification is found at serine 61. Serine 75 carries the post-translational modification Phosphoserine. 2 stretches are compositionally biased toward low complexity: residues 94–103 and 175–193; these read QPSQQQAASE and QQQQQQQHQQQHQQHQQQQ. A compositionally biased stretch (polar residues) spans 210–222; the sequence is APSSSKDSYLGGN. Tyrosine 218 carries the post-translational modification Phosphotyrosine; by CSK. At serine 251 the chain carries Phosphoserine. The residue at position 262 (tyrosine 262) is a Phosphotyrosine; by CSK and TNK2. Residues tyrosine 302, tyrosine 341, tyrosine 352, and tyrosine 357 each carry the phosphotyrosine; by CSK modification. Phosphotyrosine; by CSK and TNK2 is present on tyrosine 358. Lysine 381 participates in a covalent cross-link: Glycyl lysine isopeptide (Lys-Gly) (interchain with G-Cter in SUMO). Tyrosine 388 is subject to Phosphotyrosine; by CSK. The interval 436-471 is disordered; the sequence is EGQLYGPGGGGGSSSPSDAGPVAPYGYTRPPQGLTS. Lysine 500 participates in a covalent cross-link: Glycyl lysine isopeptide (Lys-Gly) (interchain with G-Cter in SUMO). Tyrosine 514 and tyrosine 531 each carry phosphotyrosine; by CSK. The interaction with LPXN stretch occupies residues 531-898; that stretch reads YYFPPQKTCL…GKVKPIYFHT (368 aa). Residues 538–611 constitute a DNA-binding region (nuclear receptor); that stretch reads TCLICGDEAS…AGMTLGARKL (74 aa). 2 NR C4-type zinc fingers span residues 539-559 and 575-599; these read CLICGDEASGCHYGALTCGSC and CASRNDCTIDKFRRKNCPSCRLRKC. The tract at residues 551 to 641 is interaction with HIPK3; sequence YGALTCGSCK…TEDPSQKMTV (91 aa). Positions 571–898 are interaction with CCAR1; that stretch reads QKYLCASRND…GKVKPIYFHT (328 aa). The segment at 604–898 is interaction with KAT7; sequence MTLGARKLKK…GKVKPIYFHT (295 aa). At serine 630 the chain carries Phosphoserine. An NR LBD domain is found at 648-879; sequence ECQPIFLNVL…DFPEMMAEII (232 aa). 2 residues coordinate 17beta-hydroxy-5alpha-androstan-3-one: asparagine 685 and arginine 732. Residues lysine 825 and lysine 827 each participate in a glycyl lysine isopeptide (Lys-Gly) (interchain with G-Cter in ubiquitin) cross-link. Threonine 857 is a 17beta-hydroxy-5alpha-androstan-3-one binding site. Tyrosine 895 is subject to Phosphotyrosine; by CSK.

It belongs to the nuclear hormone receptor family. NR3 subfamily. As to quaternary structure, binds DNA as a homodimer. Part of a ternary complex containing AR, EFCAB6/DJBP and PARK7. Interacts with HIPK3 and NR0B2 in the presence of androgen. The ligand binding domain interacts with KAT7/HBO1 in the presence of dihydrotestosterone. Interacts with EFCAB6/DJBP, PQBP1, RANBP9, SPDEF, SRA1, TGFB1I1, ZNF318 and RREB1. The AR N-terminal poly-Gln region binds Ran resulting in enhancement of AR-mediated transactivation. Ran-binding decreases as the poly-Gln length increases. Interacts with ZMIZ1/ZIMP10 and ZMIZ2/ZMIP7 which both enhance its transactivation activity. Interacts with RBAK. Interacts via the ligand-binding domain with LXXLL and FXXLF motifs from NCOA1, NCOA2, NCOA3 and MAGEA11. Interacts (via nuclear receptor DNA binding domain and nuclear receptor ligand binding domain) with NCOA4. Interacts with HIP1 (via coiled coil domain). Interacts with SLC30A9 and RAD54L2/ARIP4. Interacts with MACROD1 (via macro domain). Interacts (via ligand-binding domain) with TRIM68. Interacts with TNK2. Interacts with USP26. Interacts with RNF6. Interacts (regulated by RNF6 probably through polyubiquitination) with RNF14; regulates AR transcriptional activity. Interacts with PRMT2 and TRIM24. Interacts with RACK1. Interacts with RANBP10; this interaction enhances hormone-induced AR transcriptional activity. Interacts with PRPF6 in a hormone-independent way; this interaction enhances hormone-induced AR transcriptional activity. Interacts with STK4/MST1. Interacts with ZIPK/DAPK3. Interacts with LPXN. Interacts with MAK. Part of a complex containing AR, MAK and NCOA3. Interacts with CRY1. Interacts with CCAR1 and GATA2. Interacts with BUD31. Interacts with ARID4A. Interacts with ARID4B. Interacts (via NR LBD domain) with ZBTB7A; the interaction is direct and androgen-dependent. Interacts with NCOR1. Interacts with NCOR2. Interacts with CRY2 in a ligand-dependent manner. In terms of processing, phosphorylated in prostate cancer cells in response to several growth factors including EGF. Phosphorylation is induced by c-Src kinase (CSK). Tyr-514 is one of the major phosphorylation sites and an increase in phosphorylation and Src kinase activity is associated with prostate cancer progression. Phosphorylation by TNK2 enhances the DNA-binding and transcriptional activity. Phosphorylation at Ser-61 by CDK9 regulates AR promoter selectivity and cell growth. Phosphorylation by PAK6 leads to AR-mediated transcription inhibition. Post-translationally, sumoylated on Lys-381 (major) and Lys-500. Ubiquitinated. Deubiquitinated by USP26. 'Lys-6' and 'Lys-27'-linked polyubiquitination by RNF6 modulates AR transcriptional activity and specificity. Palmitoylated by ZDHHC7 and ZDHHC21. Palmitoylation is required for plasma membrane targeting and for rapid intracellular signaling via ERK and AKT kinases and cAMP generation.

It is found in the nucleus. It localises to the cytoplasm. Steroid hormone receptors are ligand-activated transcription factors that regulate eukaryotic gene expression and affect cellular proliferation and differentiation in target tissues. Transcription factor activity is modulated by bound coactivator and corepressor proteins like ZBTB7A that recruits NCOR1 and NCOR2 to the androgen response elements/ARE on target genes, negatively regulating androgen receptor signaling and androgen-induced cell proliferation. Transcription activation is also down-regulated by NR0B2. Activated, but not phosphorylated, by HIPK3 and ZIPK/DAPK3. The sequence is that of Androgen receptor (Ar) from Mus musculus (Mouse).